A 228-amino-acid chain; its full sequence is Probable 26S proteasome regulatory subunit p28 (228 aa).

ANK repeat units lie at residues Met1 to Leu30, Asp35 to Leu64, Ser71 to Leu100, Gln106 to Ile135, Phe139 to Asn168, and Gln173 to Leu203.

In terms of assembly, interacts with RPT3.

Its function is as follows. Acts as a chaperone during the assembly of the 26S proteasome, specifically of the 19S regulatory complex (RC) and appears to have an overlapping role with RPN14. This chain is Probable 26S proteasome regulatory subunit p28 (NAS6), found in Saccharomyces cerevisiae (strain ATCC 204508 / S288c) (Baker's yeast).